Reading from the N-terminus, the 325-residue chain is Beta-ketoacyl-[acyl-carrier-protein] synthase III (325 aa).

Residues Cys-119 and His-252 contribute to the active site. Positions 253-257 (QANIR) are ACP-binding. Residue Asn-282 is part of the active site.

The protein belongs to the thiolase-like superfamily. FabH family. In terms of assembly, homodimer.

It is found in the cytoplasm. It carries out the reaction malonyl-[ACP] + acetyl-CoA + H(+) = 3-oxobutanoyl-[ACP] + CO2 + CoA. Its pathway is lipid metabolism; fatty acid biosynthesis. Functionally, catalyzes the condensation reaction of fatty acid synthesis by the addition to an acyl acceptor of two carbons from malonyl-ACP. Catalyzes the first condensation reaction which initiates fatty acid synthesis and may therefore play a role in governing the total rate of fatty acid production. Possesses both acetoacetyl-ACP synthase and acetyl transacylase activities. Its substrate specificity determines the biosynthesis of branched-chain and/or straight-chain of fatty acids. The chain is Beta-ketoacyl-[acyl-carrier-protein] synthase III from Variovorax paradoxus (strain S110).